Reading from the N-terminus, the 338-residue chain is Phenylalanine--tRNA ligase alpha subunit (338 aa).

E252 contacts Mg(2+).

This sequence belongs to the class-II aminoacyl-tRNA synthetase family. Phe-tRNA synthetase alpha subunit type 1 subfamily. In terms of assembly, tetramer of two alpha and two beta subunits. Mg(2+) serves as cofactor.

It is found in the cytoplasm. It carries out the reaction tRNA(Phe) + L-phenylalanine + ATP = L-phenylalanyl-tRNA(Phe) + AMP + diphosphate + H(+). This is Phenylalanine--tRNA ligase alpha subunit from Pseudomonas putida (strain ATCC 700007 / DSM 6899 / JCM 31910 / BCRC 17059 / LMG 24140 / F1).